The sequence spans 441 residues: G-protein coupled receptor family C group 5 member C (441 aa).

Residues 1-23 form the signal peptide; it reads MAIHKALVMCLGLPLFLFPGAWA. Residues 24-50 are Extracellular-facing; that stretch reads QGHVPPGCSQGLNPLYYNLCDRSGAWG. Residues 51 to 71 form a helical membrane-spanning segment; that stretch reads IVLEAVAGAGIVTTFVLTIIL. Residues 72–85 lie on the Cytoplasmic side of the membrane; it reads VASLPFVQDTKKRS. Residues 86–106 form a helical membrane-spanning segment; it reads LLGTQVFFLLGTLGLFCLVFA. Residues 107–120 lie on the Extracellular side of the membrane; it reads CVVKPDFSTCASRR. The chain crosses the membrane as a helical span at residues 121–141; that stretch reads FLFGVLFAICFSCLAAHVFAL. The Cytoplasmic portion of the chain corresponds to 142-155; sequence NFLARKNHGPRGWV. Residues 156–176 traverse the membrane as a helical segment; it reads IFTVALLLTLVEVIINTEWLI. Residues 177–208 are Extracellular-facing; the sequence is ITLVRGSGEGGPQGNSSAGWAVASPCAIANMD. The N-linked (GlcNAc...) asparagine glycan is linked to Asn-191. A helical membrane pass occupies residues 209–229; the sequence is FVMALIYVMLLLLGAFLGAWP. Residues 230–241 are Cytoplasmic-facing; sequence ALCGRYKRWRKH. A helical transmembrane segment spans residues 242–262; that stretch reads GVFVLLTTATSVAIWVVWIVM. At 263 to 279 the chain is on the extracellular side; that stretch reads YTYGNKQHNSPTWDDPT. A helical transmembrane segment spans residues 280-300; that stretch reads LAIALAANAWAFVLFYVIPEV. Topologically, residues 301–441 are cytoplasmic; sequence SQVTKSSPEQ…QVFRNPYVWD (141 aa). Phosphoserine is present on residues Ser-344, Ser-383, Ser-403, and Ser-406. The disordered stretch occupies residues 412–441; it reads DMYSAQSHQAATPPKDGKNSQVFRNPYVWD. A Phosphotyrosine modification is found at Tyr-414. Position 423 is a phosphothreonine (Thr-423).

This sequence belongs to the G-protein coupled receptor 3 family. As to expression, expression is highest in the periphery, particularly in the stomach, but also in the kidney, liver, pancreas, and prostate. In brain, levels of expression are generally lower than in the periphery, with the exception of cerebellum, spinal cord, and dorsal root ganglia (DRG).

It is found in the cell membrane. It localises to the cytoplasmic vesicle membrane. Its function is as follows. This retinoic acid-inducible G-protein coupled receptor provide evidence for a possible interaction between retinoid and G-protein signaling pathways. The sequence is that of G-protein coupled receptor family C group 5 member C (GPRC5C) from Homo sapiens (Human).